Reading from the N-terminus, the 113-residue chain is Large ribosomal subunit protein bL19 (113 aa).

It belongs to the bacterial ribosomal protein bL19 family.

In terms of biological role, this protein is located at the 30S-50S ribosomal subunit interface and may play a role in the structure and function of the aminoacyl-tRNA binding site. The sequence is that of Large ribosomal subunit protein bL19 from Corynebacterium glutamicum (strain R).